A 447-amino-acid chain; its full sequence is Phosphoglucosamine mutase (447 aa).

Ser-101 acts as the Phosphoserine intermediate in catalysis. Mg(2+) is bound by residues Ser-101, Asp-242, Asp-244, and Asp-246. The residue at position 101 (Ser-101) is a Phosphoserine.

It belongs to the phosphohexose mutase family. Requires Mg(2+) as cofactor. Post-translationally, activated by phosphorylation.

The catalysed reaction is alpha-D-glucosamine 1-phosphate = D-glucosamine 6-phosphate. In terms of biological role, catalyzes the conversion of glucosamine-6-phosphate to glucosamine-1-phosphate. The polypeptide is Phosphoglucosamine mutase (Methylobacterium radiotolerans (strain ATCC 27329 / DSM 1819 / JCM 2831 / NBRC 15690 / NCIMB 10815 / 0-1)).